Consider the following 855-residue polypeptide: Inactive rhomboid protein 1 (855 aa).

Residues 1 to 411 lie on the Cytoplasmic side of the membrane; that stretch reads MSEARRDSTS…HRPFFTYWLT (411 aa). Residues Ser-76 and Ser-176 each carry the phosphoserine modification. Thr-180 and Thr-183 each carry phosphothreonine. The residue at position 390 (Ser-390) is a Phosphoserine. Residues 412-432 form a helical membrane-spanning segment; it reads FVHSLVTILAVCIYGIAPVGF. The Lumenal portion of the chain corresponds to 433–655; that stretch reads SQHETVDSVL…NPEVPDQFYR (223 aa). Residue Asn-583 is glycosylated (N-linked (GlcNAc...) asparagine). The chain crosses the membrane as a helical span at residues 656 to 676; it reads LWLSLFLHAGILHCLVSICFQ. The Cytoplasmic segment spans residues 677-691; the sequence is MTVLRDLEKLAGWHR. A helical membrane pass occupies residues 692–712; that stretch reads IAIIYLLSGVTGNLASAIFLP. Residues 713 to 714 are Lumenal-facing; the sequence is YR. A helical transmembrane segment spans residues 715 to 735; sequence AEVGPAGSQFGILACLFVELF. Topologically, residues 736-746 are cytoplasmic; the sequence is QSWQILARPWR. A helical membrane pass occupies residues 747-767; that stretch reads AFFKLLAVVLFLFTFGLLPWI. Residues 768–772 lie on the Lumenal side of the membrane; it reads DNFAH. The helical transmembrane segment at 773–793 threads the bilayer; the sequence is ISGFISGLFLSFAFLPYISFG. The Cytoplasmic portion of the chain corresponds to 794 to 803; that stretch reads KFDLYRKRCQ. A helical membrane pass occupies residues 804 to 824; sequence IIIFQVVFLGLLAGLVVLFYV. The Lumenal portion of the chain corresponds to 825–855; the sequence is YPVRCEWCEFLTCIPFTDKFCEKYELDAQLH.

Belongs to the peptidase S54 family. Homodimer, or homooligomer. Interacts with TGFA and HBEGF. Interacts with EGF; may retain EGF in the endoplasmic reticulum and regulates its degradation through the endoplasmic reticulum-associated degradation (ERAD). Interacts (via cytoplasmic N-terminus) with FRMD8/iTAP; this interaction leads to mutual protein stabilization. Interacts with ADAM17/TACE. N-glycosylated. As to expression, highly expressed in cerebellum, cerebrum, heart, skeletal muscle, placenta, pancreatic islet and testis. Detected at lower levels in colon, kidney, small intestine and lung.

It localises to the endoplasmic reticulum membrane. The protein resides in the golgi apparatus membrane. Its function is as follows. Regulates ADAM17 protease, a sheddase of the epidermal growth factor (EGF) receptor ligands and TNF, thereby plays a role in sleep, cell survival, proliferation, migration and inflammation. Does not exhibit any protease activity on its own. The polypeptide is Inactive rhomboid protein 1 (RHBDF1) (Homo sapiens (Human)).